Here is a 1133-residue protein sequence, read N- to C-terminus: SH3 and PX domain-containing protein 2A (1133 aa).

The PX domain maps to 4-128; that stretch reads YCVQDATVVD…RFFEARPEDV (125 aa). Positions 166–225 constitute an SH3 1 domain; the sequence is MILEQYVVVSNYKKQENSELSLQAGEVVDVIEKNESGWWFVSTSEEQGWVPATYLEAQNG. A Phosphothreonine modification is found at Thr-256. In terms of domain architecture, SH3 2 spans 266-325; sequence SREEKYVTVQPYTSQSKDEIGFEKGVTVEVIRKNLEGWWYIRYLGKEGWAPASYLKKAKD. Residues Ser-406 and Ser-421 each carry the phosphoserine modification. Disordered stretches follow at residues 415–446, 505–840, 899–924, and 941–964; these read QRAQISSPNLRTRPPPRRESSLGFQLPKPPEP, RKKP…EWEG, NEQPDPSGKELDTVPAKGRQNEGKSD, and QSKKATPPIPSKPPGGFGKTSGTP. The region spanning 448 to 507 is the SH3 3 domain; that stretch reads SVEVEYYTIAEFQSCISDGISFRGGQKAEVIDKNSGGWWYVQIGEKEGWAPASYIDKRKK. Residues 546–555 show a composition bias toward basic and acidic residues; it reads DSPRKLKYEE. Phosphoserine occurs at positions 547 and 567. Positions 567–576 are enriched in acidic residues; sequence SEPELSEEPV. Basic and acidic residues predominate over residues 577-586; that stretch reads EDRASGERRP. The residue at position 593 (Ser-593) is a Phosphoserine. Over residues 608-620 the composition is skewed to acidic residues; it reads SSEDVALEEETIY. 3 stretches are compositionally biased toward low complexity: residues 634-652, 658-670, and 686-715; these read SARGSSGDSDSPGSSSLSL, PKSGSPKSSSLLK, and SSASFSSSITINTTCCSSSSSSSSSLSKTS. A Phosphoserine modification is found at Ser-644. At Thr-731 the chain carries Phosphothreonine. Phosphoserine is present on residues Ser-767, Ser-769, and Ser-819. Thr-829 bears the Phosphothreonine mark. Residues 840 to 899 enclose the SH3 4 domain; that stretch reads GPATSYMTCSAYQKVQDSEISFPAGVEVQVLEKQESGWWYVRFGELEGWAPSHYLVLDEN. Positions 917 to 946 form a coiled coil; that stretch reads RQNEGKSDSLEKIERRVQALNTVNQSKKAT. Residues Ser-1002, Ser-1016, Ser-1017, and Ser-1038 each carry the phosphoserine modification. A disordered region spans residues 1029–1059; it reads KGRLAERAASQGSDSPLLPAQRNSIPVSPVR. The SH3 5 domain occupies 1072–1133; sequence NLKDVYVSIA…VPSNYLEKKN (62 aa).

The protein belongs to the SH3PXD2 family. Interacts (via N-terminus) with CYBA. Interacts with ADAM12, ADAM15 and ADAM19. Interacts with NOXO1. Interacts (via SH3 domains) with NOXA1. Interacts with FASLG. Interacts (via PX domain) with RAB40B (GTP-bound); interaction promotes invadopodia-mediated extracellular matrix degradation. Tyrosine phosphorylated by SRC. Phosphorylation plays a regulatory role in the protein localization. The intramolecular interaction of the PX domain with the third SH3 domain maintains the protein in the cytoplasm and phosphorylation disrupts this interaction, resulting in the redistribution of the protein from cytoplasm to the perimembrane region. Phosphorylated on serine upon DNA damage, probably by ATM or ATR. Found in several cancer cell lines, particularly invasive breast carcinomas and melanomas.

Its subcellular location is the cytoplasm. The protein localises to the cell projection. The protein resides in the podosome. In terms of biological role, adapter protein involved in invadopodia and podosome formation, extracellular matrix degradation and invasiveness of some cancer cells. Binds matrix metalloproteinases (ADAMs), NADPH oxidases (NOXs) and phosphoinositides. Acts as an organizer protein that allows NOX1- or NOX3-dependent reactive oxygen species (ROS) generation and ROS localization. In association with ADAM12, mediates the neurotoxic effect of amyloid-beta peptide. The sequence is that of SH3 and PX domain-containing protein 2A from Homo sapiens (Human).